The primary structure comprises 360 residues: NADH-quinone oxidoreductase subunit H (360 aa).

8 helical membrane-spanning segments follow: residues I22 to I42, A97 to I117, I130 to G150, I170 to M190, V208 to V228, G255 to L275, W292 to Y312, and V336 to L356.

Belongs to the complex I subunit 1 family. In terms of assembly, NDH-1 is composed of 14 different subunits. Subunits NuoA, H, J, K, L, M, N constitute the membrane sector of the complex.

It is found in the cell inner membrane. The enzyme catalyses a quinone + NADH + 5 H(+)(in) = a quinol + NAD(+) + 4 H(+)(out). In terms of biological role, NDH-1 shuttles electrons from NADH, via FMN and iron-sulfur (Fe-S) centers, to quinones in the respiratory chain. The immediate electron acceptor for the enzyme in this species is believed to be ubiquinone. Couples the redox reaction to proton translocation (for every two electrons transferred, four hydrogen ions are translocated across the cytoplasmic membrane), and thus conserves the redox energy in a proton gradient. This subunit may bind ubiquinone. The chain is NADH-quinone oxidoreductase subunit H from Neisseria meningitidis serogroup C / serotype 2a (strain ATCC 700532 / DSM 15464 / FAM18).